We begin with the raw amino-acid sequence, 891 residues long: DNA mismatch repair protein MutS (891 aa).

634 to 641 (GPNMGGKS) is a binding site for ATP.

Belongs to the DNA mismatch repair MutS family.

This protein is involved in the repair of mismatches in DNA. It is possible that it carries out the mismatch recognition step. This protein has a weak ATPase activity. This Burkholderia pseudomallei (strain 668) protein is DNA mismatch repair protein MutS.